Reading from the N-terminus, the 363-residue chain is Phospho-N-acetylmuramoyl-pentapeptide-transferase (363 aa).

The next 10 helical transmembrane spans lie at 3-23 (TVLI…PLYI), 55-75 (VVII…TGAL), 76-96 (PTVS…VGFL), 116-136 (LAGQ…FPAA), 158-178 (LAVF…LIIT), 190-210 (GLDG…VLIC), 237-257 (LAVV…WNAS), 261-281 (IFMG…LAIL), 286-306 (ILLV…ILQV), and 340-360 (FWII…AEWV).

It belongs to the glycosyltransferase 4 family. MraY subfamily. Mg(2+) serves as cofactor.

Its subcellular location is the cell membrane. The enzyme catalyses UDP-N-acetyl-alpha-D-muramoyl-L-alanyl-gamma-D-glutamyl-meso-2,6-diaminopimeloyl-D-alanyl-D-alanine + di-trans,octa-cis-undecaprenyl phosphate = di-trans,octa-cis-undecaprenyl diphospho-N-acetyl-alpha-D-muramoyl-L-alanyl-D-glutamyl-meso-2,6-diaminopimeloyl-D-alanyl-D-alanine + UMP. The protein operates within cell wall biogenesis; peptidoglycan biosynthesis. Functionally, catalyzes the initial step of the lipid cycle reactions in the biosynthesis of the cell wall peptidoglycan: transfers peptidoglycan precursor phospho-MurNAc-pentapeptide from UDP-MurNAc-pentapeptide onto the lipid carrier undecaprenyl phosphate, yielding undecaprenyl-pyrophosphoryl-MurNAc-pentapeptide, known as lipid I. This Kineococcus radiotolerans (strain ATCC BAA-149 / DSM 14245 / SRS30216) protein is Phospho-N-acetylmuramoyl-pentapeptide-transferase.